A 92-amino-acid polypeptide reads, in one-letter code: Small ribosomal subunit protein bS20 (92 aa).

The segment at 1–23 (MANSPSAKKRAKQAEKRRSHNAS) is disordered. Basic residues predominate over residues 7 to 20 (AKKRAKQAEKRRSH).

It belongs to the bacterial ribosomal protein bS20 family.

In terms of biological role, binds directly to 16S ribosomal RNA. In Pseudomonas fluorescens (strain ATCC BAA-477 / NRRL B-23932 / Pf-5), this protein is Small ribosomal subunit protein bS20.